We begin with the raw amino-acid sequence, 739 residues long: Mitochondrial proton/calcium exchanger protein (739 aa).

The transit peptide at 1–115 directs the protein to the mitochondrion; sequence MASILLRSCR…RGWHSSRPVR (115 aa). Residues 115–136 adopt a coiled-coil conformation; that stretch reads RDDSVVEKSLKSLKDKNKKLEE. At 116–208 the chain is on the mitochondrial intermembrane side; it reads DDSVVEKSLK…FLRICADLFR (93 aa). Residue Thr192 is modified to Phosphothreonine; by PINK1. The chain crosses the membrane as a helical span at residues 209–229; that stretch reads LVPFLVFVVVPFMEFLLPVAV. Topologically, residues 230–739 are mitochondrial matrix; it reads KLFPNMLPST…AEKEVAEVKS (510 aa). The 286-residue stretch at 252-537 folds into the Letm1 RBD domain; the sequence is KELRVKLELA…TAPVLEGLKE (286 aa). Coiled-coil stretches lie at residues 462–490 and 537–627; these read NKAK…KRSE and EEEI…SQLE. The residue at position 597 (Lys597) is an N6-acetyllysine. Residues 663–698 enclose the EF-hand domain; sequence IPESKLTSLAAALDENKDGKVNIDDLVKVIELVDKE. The Ca(2+) site is built by Asp676, Asn678, Asp680, Lys682, and Asp687. Residues 708-739 are a coiled coil; the sequence is AEIVATLEKEEKVEEKEKAKEKAEKEVAEVKS. The segment at 718-739 is disordered; that stretch reads EKVEEKEKAKEKAEKEVAEVKS.

The protein belongs to the LETM1 family. As to quaternary structure, homohexamer. Can form 2 complexes: a major (300 kDa) and a minor complex (500-600 kDa). Interacts with BCS1L. Interacts with GHITM. Post-translationally, PINK1-mediated phosphorylation at Thr-192, positively regulates its mitochondrial calcium transport activity.

It is found in the mitochondrion inner membrane. It carries out the reaction Ca(2+)(in) + 2 H(+)(out) = Ca(2+)(out) + 2 H(+)(in). The enzyme catalyses K(+)(in) + H(+)(out) = K(+)(out) + H(+)(in). Inhibited by ruthenium red or its derivative Ru360. Functionally, plays an important role in maintenance of mitochondrial morphology and in mediating either calcium or potassium/proton antiport. Mediates proton-dependent calcium efflux from mitochondrion. Also functions as an electroneutral mitochondrial proton/potassium exchanger. Crucial for the maintenance of mitochondrial tubular networks and for the assembly of the supercomplexes of the respiratory chain. Required for the maintenance of the tubular shape and cristae organization. This chain is Mitochondrial proton/calcium exchanger protein, found in Homo sapiens (Human).